The following is a 99-amino-acid chain: uncharacterized protein (99 aa).

This is an uncharacterized protein from Haemophilus influenzae (strain ATCC 51907 / DSM 11121 / KW20 / Rd).